The chain runs to 87 residues: Small ribosomal subunit protein bS20 (87 aa).

Residues 1–29 are disordered; sequence MANTAQARKRARQAVKQNAHNSSQRSTLR. Residues 20–29 show a composition bias toward polar residues; that stretch reads HNSSQRSTLR.

The protein belongs to the bacterial ribosomal protein bS20 family.

Binds directly to 16S ribosomal RNA. The protein is Small ribosomal subunit protein bS20 of Herminiimonas arsenicoxydans.